The following is a 506-amino-acid chain: Maturase K (506 aa).

The protein belongs to the intron maturase 2 family. MatK subfamily.

It is found in the plastid. Its subcellular location is the chloroplast. Its function is as follows. Usually encoded in the trnK tRNA gene intron. Probably assists in splicing its own and other chloroplast group II introns. This chain is Maturase K, found in Trifolium subterraneum (Subterranean clover).